Here is a 311-residue protein sequence, read N- to C-terminus: Urease accessory protein UreD (311 aa).

The protein belongs to the UreD family. As to quaternary structure, ureD, UreF and UreG form a complex that acts as a GTP-hydrolysis-dependent molecular chaperone, activating the urease apoprotein by helping to assemble the nickel containing metallocenter of UreC. The UreE protein probably delivers the nickel.

The protein localises to the cytoplasm. In terms of biological role, required for maturation of urease via the functional incorporation of the urease nickel metallocenter. In Synechococcus sp. (strain CC9605), this protein is Urease accessory protein UreD.